A 137-amino-acid chain; its full sequence is Cellular retinoic acid-binding protein 1 (137 aa).

The Nuclear localization signal motif lies at 21 to 31 (RALGVNAMLRK). An all-trans-retinoate-binding site is contributed by 132–134 (RIY).

It belongs to the calycin superfamily. Fatty-acid binding protein (FABP) family.

The protein localises to the cytoplasm. Cytosolic CRABPs may regulate the access of retinoic acid to the nuclear retinoic acid receptors. In Pelodiscus sinensis (Chinese softshell turtle), this protein is Cellular retinoic acid-binding protein 1 (CRABP1).